The primary structure comprises 93 residues: SH3 domain-binding glutamic acid-rich-like protein 3 (93 aa).

Serine 2 carries the N-acetylserine modification. An O-linked (GalNAc...) serine glycan is attached at serine 2. One can recognise a Glutaredoxin domain in the interval 2-93; it reads SGRRVYSTSV…NTLQEFLKLA (92 aa). O-linked (GalNAc...) threonine glycosylation is found at threonine 9 and threonine 12.

Belongs to the SH3BGR family. In terms of assembly, homodimer. Interacts with MYO1C (via its IQ motifs); the interaction is dependent on calcium and takes place at membrane ruffles. May be glycosylated.

Its subcellular location is the cytoplasm. The protein localises to the cytosol. It is found in the cell projection. The protein resides in the ruffle membrane. It localises to the nucleus. Its function is as follows. Could act as a modulator of glutaredoxin biological activity. May play a role in cytoskeleton organization. The sequence is that of SH3 domain-binding glutamic acid-rich-like protein 3 (SH3BGRL3) from Pongo abelii (Sumatran orangutan).